The following is a 244-amino-acid chain: Short-chain dehydrogenase/reductase family member NovK (244 aa).

Residues 9–12, 59–60, and 154–158 each bind NADP(+); these read GGGE, EL, and RPVLD.

The protein belongs to the short-chain dehydrogenases/reductases (SDR) family. Heterotetramer; the NovJ(2)K(2) heterotetramer is composed of subunits of 2 NovJ and 2 subunits of NovK.

It participates in antibiotic biosynthesis; novobiocin biosynthesis. Functionally, non-catalytic subunit of the NovJ(2)K(2) heterotetramer that catalyzes the NADPH-dependent reduction of the tyrosyl moiety of L-beta-OH-Tyr-S-NovH intermediate to yield the tethered beta-ketotyrosyl-S-NovH in the novobiocin biosynthesis pathway. Novobiocin is an aminocoumarin family antibiotic that targets bacterial DNA gyrases. In Streptomyces niveus (Streptomyces spheroides), this protein is Short-chain dehydrogenase/reductase family member NovK (novK).